The primary structure comprises 502 residues: NADH-quinone oxidoreductase subunit N (502 aa).

14 helical membrane-spanning segments follow: residues 16-36 (TLVP…IDLF), 47-67 (MLSL…AGVF), 85-105 (LAIL…PLAL), 113-133 (FSYP…QFMV), 138-158 (LILI…LIAM), 172-192 (FTMG…FYAL), 213-233 (IGFV…KLSM), 248-268 (SAAL…IVAM), 273-293 (FLIH…VVVT), 310-330 (MLAY…LIGT), 337-357 (LFLY…MLWI), 387-407 (ASIM…ALFW), 410-430 (MYLM…IMAL), and 470-490 (TIIG…NQLI).

The protein belongs to the complex I subunit 2 family. NDH-1 is composed of 14 different subunits. Subunits NuoA, H, J, K, L, M, N constitute the membrane sector of the complex.

The protein localises to the cell inner membrane. The enzyme catalyses a quinone + NADH + 5 H(+)(in) = a quinol + NAD(+) + 4 H(+)(out). Functionally, NDH-1 shuttles electrons from NADH, via FMN and iron-sulfur (Fe-S) centers, to quinones in the respiratory chain. The immediate electron acceptor for the enzyme in this species is believed to be ubiquinone. Couples the redox reaction to proton translocation (for every two electrons transferred, four hydrogen ions are translocated across the cytoplasmic membrane), and thus conserves the redox energy in a proton gradient. The chain is NADH-quinone oxidoreductase subunit N from Sulfurimonas denitrificans (strain ATCC 33889 / DSM 1251) (Thiomicrospira denitrificans (strain ATCC 33889 / DSM 1251)).